The following is an 802-amino-acid chain: Acetyl-CoA decarbonylase/synthase complex subunit alpha 1 (802 aa).

The [4Fe-4S] cluster site is built by Cys-68, Cys-71, Cys-76, and Cys-86. Position 109 (His-109) interacts with CO. [Ni-4Fe-4S] cluster is bound by residues His-243, Cys-271, and Cys-310. 2 4Fe-4S ferredoxin-type domains span residues 395 to 424 (DEAL…VDQG) and 435 to 464 (SKLA…INVI). [4Fe-4S] cluster is bound by residues Cys-405, Cys-408, Cys-411, Cys-415, Cys-444, Cys-447, Cys-450, and Cys-454. The [Ni-4Fe-4S] cluster site is built by Cys-512, Cys-541, and Cys-576.

Belongs to the Ni-containing carbon monoxide dehydrogenase family. In terms of assembly, heterotetramer of two alpha and two epsilon subunits. The ACDS complex is made up of alpha, epsilon, beta, gamma and delta subunits with a probable stoichiometry of (alpha(2)epsilon(2))(4)-beta(8)-(gamma(1)delta(1))(8). Requires [4Fe-4S] cluster as cofactor. [Ni-4Fe-4S] cluster is required as a cofactor.

It catalyses the reaction CO + 2 oxidized [2Fe-2S]-[ferredoxin] + H2O = 2 reduced [2Fe-2S]-[ferredoxin] + CO2 + 2 H(+). Functionally, part of the ACDS complex that catalyzes the reversible cleavage of acetyl-CoA, allowing autotrophic growth from CO(2). The alpha-epsilon subcomponent functions as a carbon monoxide dehydrogenase. The protein is Acetyl-CoA decarbonylase/synthase complex subunit alpha 1 of Archaeoglobus fulgidus (strain ATCC 49558 / DSM 4304 / JCM 9628 / NBRC 100126 / VC-16).